We begin with the raw amino-acid sequence, 119 residues long: Large ribosomal subunit protein bL12 (119 aa).

Belongs to the bacterial ribosomal protein bL12 family. In terms of assembly, homodimer. Part of the ribosomal stalk of the 50S ribosomal subunit. Forms a multimeric L10(L12)X complex, where L10 forms an elongated spine to which 2 to 4 L12 dimers bind in a sequential fashion. Binds GTP-bound translation factors.

In terms of biological role, forms part of the ribosomal stalk which helps the ribosome interact with GTP-bound translation factors. Is thus essential for accurate translation. The chain is Large ribosomal subunit protein bL12 from Colwellia psychrerythraea (strain 34H / ATCC BAA-681) (Vibrio psychroerythus).